The following is a 220-amino-acid chain: Probable GTP-binding protein EngB (220 aa).

In terms of domain architecture, EngB-type G spans 26-200 (EGIEIAFAGR…RAKLDEWYAP (175 aa)). Residues 34–41 (GRSNTGKS), 61–65 (GRTQL), 79–82 (DLPG), 146–149 (TKAD), and 179–181 (FSS) each bind GTP. Serine 41 and threonine 63 together coordinate Mg(2+).

The protein belongs to the TRAFAC class TrmE-Era-EngA-EngB-Septin-like GTPase superfamily. EngB GTPase family. The cofactor is Mg(2+).

Functionally, necessary for normal cell division and for the maintenance of normal septation. The chain is Probable GTP-binding protein EngB from Vibrio cholerae serotype O1 (strain ATCC 39541 / Classical Ogawa 395 / O395).